A 370-amino-acid polypeptide reads, in one-letter code: Lipoyl synthase 1, chloroplastic (370 aa).

Disordered stretches follow at residues 1-25 and 39-67; these read MMQS…PVCR and EAAP…KKPA. Residues 1-37 constitute a chloroplast transit peptide; the sequence is MMQSSLARPLPRPPIRPACGNPVCRSRPGSVSVARCR. Cys95, Cys100, Cys106, Cys132, Cys136, Cys139, and Ser347 together coordinate [4Fe-4S] cluster. The Radical SAM core domain occupies 115–336; it reads GEGDGIATAT…KEYGESVGFR (222 aa).

The protein belongs to the radical SAM superfamily. Lipoyl synthase family. [4Fe-4S] cluster serves as cofactor.

Its subcellular location is the plastid. The protein resides in the chloroplast. The catalysed reaction is [[Fe-S] cluster scaffold protein carrying a second [4Fe-4S](2+) cluster] + N(6)-octanoyl-L-lysyl-[protein] + 2 oxidized [2Fe-2S]-[ferredoxin] + 2 S-adenosyl-L-methionine + 4 H(+) = [[Fe-S] cluster scaffold protein] + N(6)-[(R)-dihydrolipoyl]-L-lysyl-[protein] + 4 Fe(3+) + 2 hydrogen sulfide + 2 5'-deoxyadenosine + 2 L-methionine + 2 reduced [2Fe-2S]-[ferredoxin]. It functions in the pathway protein modification; protein lipoylation via endogenous pathway; protein N(6)-(lipoyl)lysine from octanoyl-[acyl-carrier-protein]: step 2/2. In terms of biological role, catalyzes the radical-mediated insertion of two sulfur atoms into the C-6 and C-8 positions of the octanoyl moiety bound to the lipoyl domains of lipoate-dependent enzymes, thereby converting the octanoylated domains into lipoylated derivatives. This is Lipoyl synthase 1, chloroplastic from Oryza sativa subsp. indica (Rice).